We begin with the raw amino-acid sequence, 599 residues long: MSDLSHIRNFSIIAHIDHGKSTLADRFIQMCGGLAEREMEAQVLDSMDLERERGITIKAHSVTLYYKARDGITYQLNFIDTPGHVDFTYEVSRSLAACEGALLVVDAGQGVEAQSVANCYTAIEQGLEVMPVLNKIDLPQADPERVKEEIEKIIGIDATDAVTCSAKTGLGVDEVLERLVTTIPAPTGNIEDPLQALIIDSWFDNYLGVVSLVRVRHGRVKKGDKILVKSTGKIHLVDSVGVFNPKHTATTDLKAGEVGFIIAGIKDIHGAPVGDTLTLSSTPDVEVLPGFKRIQPQVYAGLFPVSSDDFEDFREALQKLTLNDSSLQYTPESSDALGFGFRCGFLGMLHMEIIQERLEREYDLDLITTAPTVIFELQLKNGETIYVDNPSKLPDLSAIEDMREPIVRANILVPQEHLGNVITLCIEKRGVQHDMLFLGSQVQVTYDLPMNEVVLDFFDRLKSTSRGYASLDYHFDRYQSANLVKLDVLINGEKVDALALIVHRDNAHYKGRALTEKMKELIPRQMFDVAIQAAIGGQIVARTTVKALRKNVLAKCYGGDVSRKRKLLEKQKAGKKRMKQVGNVEIPQEAFLAVLRLDS.

The 183-residue stretch at 5-187 (SHIRNFSIIA…RLVTTIPAPT (183 aa)) folds into the tr-type G domain. GTP-binding positions include 17–22 (DHGKST) and 134–137 (NKID).

It belongs to the TRAFAC class translation factor GTPase superfamily. Classic translation factor GTPase family. LepA subfamily.

The protein resides in the cell inner membrane. The catalysed reaction is GTP + H2O = GDP + phosphate + H(+). Its function is as follows. Required for accurate and efficient protein synthesis under certain stress conditions. May act as a fidelity factor of the translation reaction, by catalyzing a one-codon backward translocation of tRNAs on improperly translocated ribosomes. Back-translocation proceeds from a post-translocation (POST) complex to a pre-translocation (PRE) complex, thus giving elongation factor G a second chance to translocate the tRNAs correctly. Binds to ribosomes in a GTP-dependent manner. In Pseudomonas fluorescens (strain ATCC BAA-477 / NRRL B-23932 / Pf-5), this protein is Elongation factor 4.